A 158-amino-acid chain; its full sequence is Ribosome maturation factor RimP (158 aa).

Belongs to the RimP family.

It localises to the cytoplasm. Functionally, required for maturation of 30S ribosomal subunits. This Pseudomonas fluorescens (strain ATCC BAA-477 / NRRL B-23932 / Pf-5) protein is Ribosome maturation factor RimP.